Consider the following 488-residue polypeptide: 3-octaprenyl-4-hydroxybenzoate carboxy-lyase (488 aa).

A Mn(2+)-binding site is contributed by Asn-172. Prenylated FMN-binding positions include 175-177, 189-191, and 194-195; these read IYR, RWL, and RG. Glu-238 lines the Mn(2+) pocket. The active-site Proton donor is the Asp-287.

The protein belongs to the UbiD family. Homohexamer. Requires prenylated FMN as cofactor. Mn(2+) serves as cofactor.

It is found in the cell membrane. The catalysed reaction is a 4-hydroxy-3-(all-trans-polyprenyl)benzoate + H(+) = a 2-(all-trans-polyprenyl)phenol + CO2. Its pathway is cofactor biosynthesis; ubiquinone biosynthesis. Its function is as follows. Catalyzes the decarboxylation of 3-octaprenyl-4-hydroxy benzoate to 2-octaprenylphenol, an intermediate step in ubiquinone biosynthesis. In Legionella pneumophila subsp. pneumophila (strain Philadelphia 1 / ATCC 33152 / DSM 7513), this protein is 3-octaprenyl-4-hydroxybenzoate carboxy-lyase.